A 346-amino-acid chain; its full sequence is Histone PARylation factor 1 (346 aa).

At Met-1 the chain carries N-acetylmethionine. The disordered stretch occupies residues 1 to 23 (MVGGGGKRRPGGEGPQCEKTTDV). Residue Lys-19 is modified to N6-acetyllysine. Position 97 is an ADP-ribosylserine (Ser-97). N6-acetyllysine is present on residues Lys-186 and Lys-233. Residue Asp-235 is modified to PolyADP-ribosyl aspartic acid. Tyr-238 carries the post-translational modification ADP-ribosyltyrosine. Glu-240 is modified (polyADP-ribosyl glutamic acid). Positions 242–346 (PETDADLKRI…SQENIDQLAA (105 aa)) are interaction with PARP1. Glu-284 functions as the Proton donor in the catalytic mechanism.

The protein belongs to the HPF1 family. In terms of assembly, interacts with PARP1 (via the PARP catalytic domain). Interacts with PARP2 (via the PARP catalytic domain). Interacts with core nucleosomes in a PARP1- and PARP2-dependent manner.

Its subcellular location is the chromosome. It localises to the nucleus. Functionally, cofactor for serine ADP-ribosylation that confers serine specificity on PARP1 and PARP2 and plays a key role in DNA damage response. Initiates the repair of double-strand DNA breaks: recruited to DNA damage sites by PARP1 and PARP2 and switches the amino acid specificity of PARP1 and PARP2 from aspartate or glutamate to serine residues, licensing serine ADP-ribosylation of target proteins. Serine ADP-ribosylation of target proteins, such as histones, promotes decompaction of chromatin and the recruitment of repair factors leading to the reparation of DNA strand breaks. Serine ADP-ribosylation of proteins constitutes the primary form of ADP-ribosylation of proteins in response to DNA damage. HPF1 acts by completing the active site of PARP1 and PARP2: forms a composite active site composed of residues from HPF1 and PARP1 or PARP2. While HPF1 promotes the initiation of serine ADP-ribosylation, it restricts the polymerase activity of PARP1 and PARP2 in order to limit the length of poly-ADP-ribose chains. HPF1 also promotes tyrosine ADP-ribosylation, probably by conferring tyrosine specificity on PARP1. The chain is Histone PARylation factor 1 from Homo sapiens (Human).